Here is a 253-residue protein sequence, read N- to C-terminus: Ribonuclease 3 (253 aa).

The region spanning 29-157 (VDELQKTIGH…MLGAVFLDAG (129 aa)) is the RNase III domain. Residue Glu-70 participates in Mg(2+) binding. Asp-74 is an active-site residue. The Mg(2+) site is built by Asp-143 and Glu-146. The active site involves Glu-146. A DRBM domain is found at 184–253 (DYKSQLQELT…AARAVATLDK (70 aa)).

Belongs to the ribonuclease III family. Homodimer. It depends on Mg(2+) as a cofactor.

Its subcellular location is the cytoplasm. It catalyses the reaction Endonucleolytic cleavage to 5'-phosphomonoester.. Its function is as follows. Digests double-stranded RNA. Involved in the processing of primary rRNA transcript to yield the immediate precursors to the large and small rRNAs (23S and 16S). Processes some mRNAs, and tRNAs when they are encoded in the rRNA operon. Processes pre-crRNA and tracrRNA of type II CRISPR loci if present in the organism. This is Ribonuclease 3 from Nitratidesulfovibrio vulgaris (strain ATCC 29579 / DSM 644 / CCUG 34227 / NCIMB 8303 / VKM B-1760 / Hildenborough) (Desulfovibrio vulgaris).